A 268-amino-acid polypeptide reads, in one-letter code: Shikimate dehydrogenase (NADP(+)) (268 aa).

Residues 13 to 15 (SLS) and Thr-60 contribute to the shikimate site. Residue Lys-64 is the Proton acceptor of the active site. Residue Glu-76 coordinates NADP(+). Shikimate is bound by residues Asn-85 and Asp-100. NADP(+)-binding positions include 124-128 (GAGGA), 148-153 (NRTMAR), and Ile-209. Tyr-211 contributes to the shikimate binding site. Gly-232 contributes to the NADP(+) binding site.

It belongs to the shikimate dehydrogenase family. As to quaternary structure, homodimer.

The enzyme catalyses shikimate + NADP(+) = 3-dehydroshikimate + NADPH + H(+). It functions in the pathway metabolic intermediate biosynthesis; chorismate biosynthesis; chorismate from D-erythrose 4-phosphate and phosphoenolpyruvate: step 4/7. Functionally, involved in the biosynthesis of the chorismate, which leads to the biosynthesis of aromatic amino acids. Catalyzes the reversible NADPH linked reduction of 3-dehydroshikimate (DHSA) to yield shikimate (SA). The polypeptide is Shikimate dehydrogenase (NADP(+)) (Staphylococcus aureus (strain JH1)).